Consider the following 65-residue polypeptide: Large ribosomal subunit protein bL33c (65 aa).

It belongs to the bacterial ribosomal protein bL33 family.

The protein resides in the plastid. The protein localises to the chloroplast. This is Large ribosomal subunit protein bL33c (rpl33) from Marchantia polymorpha (Common liverwort).